Consider the following 59-residue polypeptide: Large ribosomal subunit protein bL35 (59 aa).

Over residues Gly17–Lys43 the composition is skewed to basic residues. The interval Gly17–Val47 is disordered.

This sequence belongs to the bacterial ribosomal protein bL35 family.

This chain is Large ribosomal subunit protein bL35, found in Mycoplasma genitalium (strain ATCC 33530 / DSM 19775 / NCTC 10195 / G37) (Mycoplasmoides genitalium).